The chain runs to 528 residues: MSKVWVGGFLCVYGEEPSEECLALPRDTVQKELGSGNIPLPLNINHNEKATIGMVRGLFDLEHGLFCVAQIQSQTFMDIIRNIAGKSKLITAGSVIEPLPPDPEIECLSSSFPGLSLSSKVLQDENLDGKPFFHHVSVCGVGRRPGTIAIFGREISWILDRFSCISESEKRQVLEGVNVYSQGFDENLFSADLYDLLADSLDTSYIRKRFPKLQLDKQLCGLSKCTYIKASEPPVEIIVAATKVAGDQVQLTTEPGSELAVETCDVPVVHGNYDAVESATATTAMSNQNLPNTTPLLSSPPFSDCVFLPKDAFFSLLNVTTGQQPKIVPPVSVHPPVTEQYQMLPYSESAAKIAEHESNRYHSPCQAMYPYWQYSPVPQYPAALHGYRQSKTLKKRHFQSDSEDELSFPGDPEYTKKRRRHRVDNDDDKEMAREKNDLRELVDMIGMLRQEISALKHVRAQSPQRHIVPMETLPTIEEKGAASPKPSILNASLAPETVNRSLAGQNESTDLLKLNKKLFVDALNKMDS.

Catalysis depends on charge relay system residues His46, Ser116, and His135. The interaction with pAP stretch occupies residues His270–Gln288. Residues Lys394–Met431 are disordered. Positions Lys416–Arg422 match the Nuclear localization signal motif. Residues Ser508–Ser528 are interaction with major capsid protein.

Belongs to the herpesviridae capsid scaffolding protein family. Homomultimer. Interacts with major capsid protein. In terms of assembly, exists in a monomer-dimer equilibrium with the dimer being the active species. Capsid scaffolding protein is cleaved by assemblin after formation of the spherical procapsid. As a result, the capsid obtains its mature, icosahedral shape. Cleavages occur at two or more sites: release (R-site) and maturation (M-site).

The protein resides in the host cytoplasm. Its subcellular location is the host nucleus. The enzyme catalyses Cleaves -Ala-|-Ser- and -Ala-|-Ala- bonds in the scaffold protein.. In terms of biological role, acts as a scaffold protein by binding major capsid protein in the cytoplasm, inducing the nuclear localization of both proteins. Multimerizes in the nucleus such as major capsid protein forms the icosahedral T=16 capsid. Autocatalytic cleavage releases the assembly protein, and subsequently abolishes interaction with major capsid protein. Cleavages products are evicted from the capsid before or during DNA packaging. Its function is as follows. Protease that plays an essential role in virion assembly within the nucleus. Catalyzes the cleavage of the assembly protein after formation of the spherical procapsid. By that cleavage, the capsid matures and gains its icosahedral shape. The cleavage sites seem to include -Ala-Ser-, -Ala-Ala-, as well as Ala-Thr bonds. Assemblin and cleavages products are evicted from the capsid before or during DNA packaging. Functionally, plays a major role in capsid assembly. Acts as a scaffold protein by binding major capsid protein. Multimerizes in the nucleus such as major capsid protein forms the icosahedral T=16 capsid. Cleaved by assemblin after capsid completion. The cleavages products are evicted from the capsid before or during DNA packaging. This chain is Capsid scaffolding protein (U53), found in Homo sapiens (Human).